A 130-amino-acid chain; its full sequence is Small ribosomal subunit protein uS11 (130 aa).

It belongs to the universal ribosomal protein uS11 family. As to quaternary structure, part of the 30S ribosomal subunit. Interacts with proteins S7 and S18. Binds to IF-3.

Functionally, located on the platform of the 30S subunit, it bridges several disparate RNA helices of the 16S rRNA. Forms part of the Shine-Dalgarno cleft in the 70S ribosome. This Helicobacter hepaticus (strain ATCC 51449 / 3B1) protein is Small ribosomal subunit protein uS11.